The following is a 63-amino-acid chain: MHSLKGDFVSNNVTISHCHLPLSPATAIAIIICFRIVTDLKLSRLTYAFYLPGPISFLPVIPI.

The helical transmembrane segment at 15 to 37 threads the bilayer; sequence ISHCHLPLSPATAIAIIICFRIV.

The protein localises to the membrane. This is an uncharacterized protein from Saccharomyces cerevisiae (strain ATCC 204508 / S288c) (Baker's yeast).